Consider the following 264-residue polypeptide: 3-methyl-2-oxobutanoate hydroxymethyltransferase (264 aa).

The Mg(2+) site is built by D45 and D84. 3-methyl-2-oxobutanoate contacts are provided by residues 45 to 46 (DS), D84, and K112. Mg(2+) is bound at residue E114. Catalysis depends on E181, which acts as the Proton acceptor.

This sequence belongs to the PanB family. In terms of assembly, homodecamer; pentamer of dimers. Mg(2+) is required as a cofactor.

It localises to the cytoplasm. It catalyses the reaction 3-methyl-2-oxobutanoate + (6R)-5,10-methylene-5,6,7,8-tetrahydrofolate + H2O = 2-dehydropantoate + (6S)-5,6,7,8-tetrahydrofolate. It participates in cofactor biosynthesis; (R)-pantothenate biosynthesis; (R)-pantoate from 3-methyl-2-oxobutanoate: step 1/2. Its function is as follows. Catalyzes the reversible reaction in which hydroxymethyl group from 5,10-methylenetetrahydrofolate is transferred onto alpha-ketoisovalerate to form ketopantoate. This chain is 3-methyl-2-oxobutanoate hydroxymethyltransferase, found in Alteromonas mediterranea (strain DSM 17117 / CIP 110805 / LMG 28347 / Deep ecotype).